A 296-amino-acid chain; its full sequence is Protoheme IX farnesyltransferase (296 aa).

Residues 1-9 are Cytoplasmic-facing; it reads MMFKQYLQV. The helical transmembrane segment at 10–28 threads the bilayer; it reads TKPGIIFGNLISVIGGFLL. Residues 29–37 lie on the Periplasmic side of the membrane; it reads ASKGSIDYP. A helical transmembrane segment spans residues 38–56; the sequence is LFIYTLVGVSLVVASGCVF. The Cytoplasmic portion of the chain corresponds to 57–78; the sequence is NNYIDRDIDRKMERTKNRVLVK. The helical transmembrane segment at 79-97 threads the bilayer; that stretch reads GLISPAVSLVYATLLGIAG. Residues 98-107 are Periplasmic-facing; the sequence is FMLLWFGANP. Residues 108-126 traverse the membrane as a helical segment; sequence LACWLGVMGFVVYVGVYSL. Residues 127 to 197 lie on the Cytoplasmic side of the membrane; that stretch reads YMKRHSVYGT…YQAANIPVLP (71 aa). The chain crosses the membrane as a helical span at residues 198 to 216; that stretch reads VVKGISVAKNHITLYIIAF. The Periplasmic portion of the chain corresponds to 217–228; sequence AVATLMLSLGGY. The helical transmembrane segment at 229-247 threads the bilayer; sequence AGYKYLVVAAAVSVWWLGM. Topologically, residues 248–268 are cytoplasmic; it reads ALRGYKVADDRIWARKLFGFS. A helical transmembrane segment spans residues 269–287; sequence IIAITALSVMMSVDFMVPD. The Periplasmic portion of the chain corresponds to 288–296; sequence SHTLLAAVW.

This sequence belongs to the UbiA prenyltransferase family. Protoheme IX farnesyltransferase subfamily.

Its subcellular location is the cell inner membrane. The enzyme catalyses heme b + (2E,6E)-farnesyl diphosphate + H2O = Fe(II)-heme o + diphosphate. The protein operates within porphyrin-containing compound metabolism; heme O biosynthesis; heme O from protoheme: step 1/1. In terms of biological role, converts heme B (protoheme IX) to heme O by substitution of the vinyl group on carbon 2 of heme B porphyrin ring with a hydroxyethyl farnesyl side group. In Escherichia coli O139:H28 (strain E24377A / ETEC), this protein is Protoheme IX farnesyltransferase.